A 290-amino-acid chain; its full sequence is GTPase Era (290 aa).

The Era-type G domain maps to 2–144 (KVLKVGVLGP…AIILEEFKPQ (143 aa)). Positions 10 to 17 (GPTNAGKS) are G1. 10–17 (GPTNAGKS) contacts GTP. The interval 36 to 40 (NTTLL) is G2. A G3 region spans residues 58–61 (DVPG). 58 to 62 (DVPGF) contacts GTP. The tract at residues 97–100 (NKIE) is G4. The segment at 121–123 (INK) is G5. 122–125 (NKFH) is a binding site for GTP. Residues 201 to 279 (CKNEIPHIAR…FIDIFVKTEK (79 aa)) form the KH type-2 domain.

It belongs to the TRAFAC class TrmE-Era-EngA-EngB-Septin-like GTPase superfamily. Era GTPase family. As to quaternary structure, monomer.

The protein localises to the cytoplasm. Its subcellular location is the cell membrane. Functionally, an essential GTPase that binds both GDP and GTP, with rapid nucleotide exchange. Plays a role in 16S rRNA processing and 30S ribosomal subunit biogenesis and possibly also in cell cycle regulation and energy metabolism. The sequence is that of GTPase Era from Mycoplasma genitalium (strain ATCC 33530 / DSM 19775 / NCTC 10195 / G37) (Mycoplasmoides genitalium).